The chain runs to 119 residues: Large ribosomal subunit protein bL20 (119 aa).

Belongs to the bacterial ribosomal protein bL20 family.

Binds directly to 23S ribosomal RNA and is necessary for the in vitro assembly process of the 50S ribosomal subunit. It is not involved in the protein synthesizing functions of that subunit. The chain is Large ribosomal subunit protein bL20 from Thermoanaerobacter pseudethanolicus (strain ATCC 33223 / 39E) (Clostridium thermohydrosulfuricum).